Here is an 85-residue protein sequence, read N- to C-terminus: Small ribosomal subunit protein bS16 (85 aa).

It belongs to the bacterial ribosomal protein bS16 family.

The protein is Small ribosomal subunit protein bS16 of Clostridium novyi (strain NT).